Reading from the N-terminus, the 426-residue chain is Chaperone SurA (426 aa).

The first 19 residues, methionine 1–alanine 19, serve as a signal peptide directing secretion. PpiC domains follow at residues aspartate 169–aspartate 270 and valine 280–aspartate 379.

Its subcellular location is the periplasm. The catalysed reaction is [protein]-peptidylproline (omega=180) = [protein]-peptidylproline (omega=0). Chaperone involved in the correct folding and assembly of outer membrane proteins. Recognizes specific patterns of aromatic residues and the orientation of their side chains, which are found more frequently in integral outer membrane proteins. May act in both early periplasmic and late outer membrane-associated steps of protein maturation. In Nitrosococcus oceani (strain ATCC 19707 / BCRC 17464 / JCM 30415 / NCIMB 11848 / C-107), this protein is Chaperone SurA.